The primary structure comprises 510 residues: Bifunctional pantoate ligase/cytidylate kinase (510 aa).

The pantoate--beta-alanine ligase stretch occupies residues 1–276 (MNKIIIRKTE…CGKTRLIDHV (276 aa)). 29–36 (MGNLHDGH) is a binding site for ATP. His36 functions as the Proton donor in the catalytic mechanism. (R)-pantoate is bound at residue Gln61. Position 61 (Gln61) interacts with beta-alanine. An ATP-binding site is contributed by 150–153 (GEKD). Residue Gln156 participates in (R)-pantoate binding. 187 to 190 (FSSR) provides a ligand contact to ATP. The cytidylate kinase stretch occupies residues 277 to 510 (FLMKRKPIIA…LNIPKEIQLE (234 aa)).

It in the N-terminal section; belongs to the pantothenate synthetase family. The protein in the C-terminal section; belongs to the cytidylate kinase family. Type 1 subfamily.

It is found in the cytoplasm. The enzyme catalyses (R)-pantoate + beta-alanine + ATP = (R)-pantothenate + AMP + diphosphate + H(+). It catalyses the reaction CMP + ATP = CDP + ADP. It carries out the reaction dCMP + ATP = dCDP + ADP. The protein operates within cofactor biosynthesis; (R)-pantothenate biosynthesis; (R)-pantothenate from (R)-pantoate and beta-alanine: step 1/1. Functionally, catalyzes the condensation of pantoate with beta-alanine in an ATP-dependent reaction via a pantoyl-adenylate intermediate. In terms of biological role, catalyzes the transfer of a phosphate group from ATP to either CMP or dCMP to form CDP or dCDP and ADP, respectively. This is Bifunctional pantoate ligase/cytidylate kinase from Prochlorococcus marinus subsp. pastoris (strain CCMP1986 / NIES-2087 / MED4).